We begin with the raw amino-acid sequence, 533 residues long: T-complex protein 1 subunit delta (533 aa).

Residues M1–A24 form a disordered region.

It belongs to the TCP-1 chaperonin family. As to quaternary structure, heterooligomeric complex of about 850 to 900 kDa that forms two stacked rings, 12 to 16 nm in diameter.

Its subcellular location is the cytoplasm. Functionally, molecular chaperone; assists the folding of proteins upon ATP hydrolysis. Known to play a role, in vitro, in the folding of actin and tubulin. The sequence is that of T-complex protein 1 subunit delta from Ochlerotatus triseriatus (Eastern treehole mosquito).